We begin with the raw amino-acid sequence, 405 residues long: Cysteine desulfurase IscS (405 aa).

Residues 75–76, Asn-156, Gln-184, and 204–206 contribute to the pyridoxal 5'-phosphate site; these read AT and SAH. Position 207 is an N6-(pyridoxal phosphate)lysine (Lys-207). Position 244 (Thr-244) interacts with pyridoxal 5'-phosphate. Cys-329 (cysteine persulfide intermediate) is an active-site residue. Cys-329 contacts [2Fe-2S] cluster.

This sequence belongs to the class-V pyridoxal-phosphate-dependent aminotransferase family. NifS/IscS subfamily. As to quaternary structure, homodimer. Forms a heterotetramer with IscU, interacts with other sulfur acceptors. Requires pyridoxal 5'-phosphate as cofactor.

Its subcellular location is the cytoplasm. It carries out the reaction (sulfur carrier)-H + L-cysteine = (sulfur carrier)-SH + L-alanine. Its pathway is cofactor biosynthesis; iron-sulfur cluster biosynthesis. In terms of biological role, master enzyme that delivers sulfur to a number of partners involved in Fe-S cluster assembly, tRNA modification or cofactor biosynthesis. Catalyzes the removal of elemental sulfur atoms from cysteine to produce alanine. Functions as a sulfur delivery protein for Fe-S cluster synthesis onto IscU, an Fe-S scaffold assembly protein, as well as other S acceptor proteins. The polypeptide is Cysteine desulfurase IscS (Acinetobacter baumannii (strain SDF)).